A 475-amino-acid polypeptide reads, in one-letter code: Putative aldehyde dehydrogenase (475 aa).

Residues 146-147 (WN) and 223-224 (GS) contribute to the NAD(+) site. Glu-245 functions as the Proton acceptor in the catalytic mechanism. Residue Leu-246 participates in NAD(+) binding. Catalysis depends on Cys-279, which acts as the Nucleophile. Glu-379 serves as a coordination point for NAD(+).

Belongs to the aldehyde dehydrogenase family.

The enzyme catalyses an aldehyde + NAD(+) + H2O = a carboxylate + NADH + 2 H(+). In Staphylococcus aureus (strain MSSA476), this protein is Putative aldehyde dehydrogenase.